The chain runs to 300 residues: Zinc finger CCCH-type antiviral protein 1-like (300 aa).

N-acetylalanine is present on alanine 2. Polar residues predominate over residues 252 to 263 (NTDNSSPSTEHS). The interval 252-300 (NTDNSSPSTEHSQGLEKQGVHAAGAAEAGPLASVPAQSAKKPCPVSCEK) is disordered. Low complexity predominate over residues 271 to 283 (VHAAGAAEAGPLA).

The sequence is that of Zinc finger CCCH-type antiviral protein 1-like (ZC3HAV1L) from Homo sapiens (Human).